The primary structure comprises 695 residues: Exocyst complex component EXO70C2 (695 aa).

The segment covering 1–36 (MEKNDKDPDHDDKSKGDEKGDVVSDAHPSDDAHHQD) has biased composition (basic and acidic residues). Disordered regions lie at residues 1 to 71 (MEKN…EEAP) and 210 to 229 (VVTD…QDHQ). Phosphothreonine is present on Thr212. Ser215 and Ser217 each carry phosphoserine. Thr446 is modified (phosphothreonine). Phosphoserine is present on residues Ser494 and Ser605.

Belongs to the EXO70 family. Interacts with ROH1A and ROH1D independently of its phosphorylation status. In terms of processing, phosphorylation on Ser and Thr residues promotes its ability to repress pollen tube growth and to regulate cellular architecture at the pollen tube tip. In terms of tissue distribution, expressed in anthers, pollen and root trichoblast cells. Also observed in anther tapetum.

The protein resides in the cytoplasm. Functionally, required for optimal tip growth of pollen tube; dose-dependent negative regulator of exocyst function in pollen tube growth and cellular architecture at the pollen tube tip, probably by modulating membrane trafficking and exocytosis dynamics. This Arabidopsis thaliana (Mouse-ear cress) protein is Exocyst complex component EXO70C2.